Reading from the N-terminus, the 471-residue chain is Adenosylhomocysteinase (471 aa).

Residues threonine 60, aspartate 135, and glutamate 196 each coordinate substrate. NAD(+) is bound at residue 197-199; the sequence is TTT. 2 residues coordinate substrate: lysine 226 and aspartate 230. Residues asparagine 231, 260–265, glutamate 283, asparagine 318, 339–341, and asparagine 387 contribute to the NAD(+) site; these read GYGDVG and IGH.

This sequence belongs to the adenosylhomocysteinase family. Requires NAD(+) as cofactor.

Its subcellular location is the cytoplasm. The catalysed reaction is S-adenosyl-L-homocysteine + H2O = L-homocysteine + adenosine. It participates in amino-acid biosynthesis; L-homocysteine biosynthesis; L-homocysteine from S-adenosyl-L-homocysteine: step 1/1. May play a key role in the regulation of the intracellular concentration of adenosylhomocysteine. This chain is Adenosylhomocysteinase, found in Pelodictyon phaeoclathratiforme (strain DSM 5477 / BU-1).